Reading from the N-terminus, the 772-residue chain is U3 small nucleolar RNA-associated protein 25 homolog (772 aa).

The interval 1–179 (MGKRRNRGRS…SEEFTDVKHE (179 aa)) is disordered. Promotes p53/TP53 degradation stretches follow at residues 1–201 (MGKR…SQRP) and 589–651 (VQLP…KKEE). Serine 10 is subject to Phosphoserine. Over residues 25 to 43 (RDFGEEHPFYDRVSKKEAK) the composition is skewed to basic and acidic residues. Serine 52, serine 60, and serine 64 each carry phosphoserine. Basic and acidic residues predominate over residues 54-70 (DSSHSESESESEQEHVS). The segment covering 84 to 124 (EEEEEEEEEEEEEEEEEEEEEEEEEDDSAVGDAEMNEEAGS) has biased composition (acidic residues). A compositionally biased stretch (low complexity) spans 127–136 (GSVGEAAVSE). Basic and acidic residues predominate over residues 169–179 (SSEEFTDVKHE). The tract at residues 652 to 713 (LNFTHICEYT…YELPTYPHFY (62 aa)) is represses p53/TP53 degradation.

The protein belongs to the UTP25 family. In terms of assembly, interacts with CAPN3; the interaction is required for CAPN3 translocation to the nucleolus. In terms of processing, phosphorylated. Phosphorylation is required to promote p53/TP53 degradation in the nucleolus which promotes cell cycle progression and liver development. Expressed in all tissues tested: brain, small intestine, large intestine, stomach, liver, spleen, thymus, lung, kidney and testes (at protein level).

It localises to the nucleus. The protein resides in the nucleolus. Component of the ribosomal small subunit processome for the biogenesis of ribosomes, functions in pre-ribosomal RNA (pre-rRNA) processing. Essential for embryonic development in part through the regulation of p53 pathway. Controls the expansion growth of digestive organs and liver. Also involved in the sympathetic neuronal development. Mediates, with CAPN3, the proteasome-independent degradation of p53/TP53. This is U3 small nucleolar RNA-associated protein 25 homolog from Mus musculus (Mouse).